Consider the following 621-residue polypeptide: MADFEELRNMVSSFRVSELQVLLGFAGRNKSGRKHDLLMRALHLLKSGCSPAVQIKIRELYRRRYPRTLEGLCDLSTIKSSVFSLDGSSSPVEPDLPVAGIHSLPSTSITPHSPSSPVGSVLLQDTKPTFEMQQPSPPIPPVHPDVQLKNLPFYDVLDVLIKPTSLVQSSIQRFQEKFFIFALTPQQVREICISRDFLPGGRRDYTVQVQLRLCLAETSCPQEDNYPNSLCIKVNGKLFPLPGYAPPPKNGIEQKRPGRPLNITSLVRLSSAVPNQISISWASEIGKNYSMSVYLVRQLTSAMLLQRLKMKGIRNPDHSRALIKEKLTADPDSEIATTSLRVSLMCPLGKMRLTIPCRAVTCTHLQCFDAALYLQMNEKKPTWICPVCDKKAAYESLILDGLFMEILNDCSDVDEIKFQEDGSWCPMRPKKEAMKVTSQPCTKVESSSVFSKPCSVTVASDASKKKIDVIDLTIESSSDEEEDPPAKRKCIFMSETQSSPTKGVLMYQPSSVRVPSVTSVDPAAIPPSLTDYSVPFHHTPVSSMSSDLPGLDFLSLIPVDPQYCPPMFLDSLTSPLTASSTSVTTTSPHESSTHVSSSSSRSETGVITSSGRNIPDIISLD.

One can recognise an SAP domain in the interval 11 to 45 (VSSFRVSELQVLLGFAGRNKSGRKHDLLMRALHLL). The short motif at 19–23 (LQVLL) is the LXXLL motif element. Glycyl lysine isopeptide (Lys-Gly) (interchain with G-Cter in SUMO2) cross-links involve residues K46 and K249. One can recognise a PINIT domain in the interval 134-299 (QPSPPIPPVH…SMSVYLVRQL (166 aa)). The SP-RING-type zinc-finger motif lies at 331-412 (PDSEIATTSL…FMEILNDCSD (82 aa)). Zn(2+) contacts are provided by C362, H364, C385, and C388. Residues K430, K435, K443, and K452 each participate in a glycyl lysine isopeptide (Lys-Gly) (interchain with G-Cter in SUMO2) cross-link. Residues 467–473 (IDVIDLT) are SUMO1-binding. Phosphoserine occurs at positions 476, 477, and 478. A Nuclear localization signal motif is present at residues 484-492 (PPAKRKCIF). K489 participates in a covalent cross-link: Glycyl lysine isopeptide (Lys-Gly) (interchain with G-Cter in SUMO2). Phosphoserine is present on S499. A Glycyl lysine isopeptide (Lys-Gly) (interchain with G-Cter in SUMO2) cross-link involves residue K502. Low complexity predominate over residues 577–610 (TASSTSVTTTSPHESSTHVSSSSSRSETGVITSS). Positions 577-621 (TASSTSVTTTSPHESSTHVSSSSSRSETGVITSSGRNIPDIISLD) are disordered.

It belongs to the PIAS family. In terms of assembly, binds SUMO1 and UBE2I. Interacts with AXIN1, JUN, MDM2, PARK7, TP53 and TP73 isoform alpha, but not TP73 isoform beta. Interacts with STAT4 following IL12 and IFN-alpha stimulation of T-cells. Interacts also with GTF2I, GTF2IRD1, IKFZ1, DAB2 and MSX2, as well as with several steroid receptors, including ESR1, ESR2, NR3C1, PGR, AR, and with NCOA2. Sumoylation of a target protein seems to enhance the interaction. Binds to sumoylated ELK1. Interacts with PLAG1. Binds DNA, such as CDKN1A promoter, in a sequence-specific manner. Interacts with KLF8; the interaction results in SUMO ligation and repression of KLF8 transcriptional activity and of its cell cycle progression into G(1) phase. Interacts with IFIH1/MDA5. Interacts with PML. Interacts with PRDM1. Post-translationally, sumoylated.

It is found in the nucleus speckle. The protein resides in the nucleus. The protein localises to the PML body. It catalyses the reaction S-ubiquitinyl-[E2 ubiquitin-conjugating enzyme]-L-cysteine + [acceptor protein]-L-lysine = [E2 ubiquitin-conjugating enzyme]-L-cysteine + N(6)-ubiquitinyl-[acceptor protein]-L-lysine.. It participates in protein modification; protein sumoylation. Functions as an E3-type small ubiquitin-like modifier (SUMO) ligase, stabilizing the interaction between UBE2I and the substrate, and as a SUMO-tethering factor. Plays a crucial role as a transcriptional coregulation in various cellular pathways, including the STAT pathway, the p53 pathway and the steroid hormone signaling pathway. The effects of this transcriptional coregulation, transactivation or silencing may vary depending upon the biological context and PIAS2 isoform studied. However, it seems to be mostly involved in gene silencing. Binds to sumoylated ELK1 and enhances its transcriptional activity by preventing recruitment of HDAC2 by ELK1, thus reversing SUMO-mediated repression of ELK1 transactivation activity. Isoform PIASx-beta, but not isoform PIASx-alpha, promotes MDM2 sumoylation. Isoform PIASx-alpha promotes PARK7 sumoylation. Isoform PIASx-beta promotes NCOA2 sumoylation more efficiently than isoform PIASx-alpha. Sumoylates PML at'Lys-65' and 'Lys-160'. The chain is E3 SUMO-protein ligase PIAS2 (Pias2) from Mus musculus (Mouse).